The sequence spans 55 residues: Potassium channel toxin alpha-KTx 17.1 (55 aa).

Residues 1–23 (MKFIIVLILISVLIATIVPVNEA) form the signal peptide. A Pyrrolidone carboxylic acid modification is found at Gln24. 3 disulfides stabilise this stretch: Cys27–Cys43, Cys33–Cys48, and Cys37–Cys50. Thr53 carries the post-translational modification Threonine amide.

It belongs to the short scorpion toxin superfamily. Potassium channel inhibitor family. Alpha-KTx 17 subfamily. Expressed by the venom gland.

The protein resides in the secreted. Functionally, blocker of potassium channels, which inhibits both the delayed rectifier and fast transient potassium current. The inhibition is reversible and voltage-independent. It causes a depolarizing shift of the steady-state activation curve of the currents, without changing their steady-state inactivation behavior. The chain is Potassium channel toxin alpha-KTx 17.1 from Olivierus martensii (Manchurian scorpion).